We begin with the raw amino-acid sequence, 323 residues long: Pantothenate kinase (323 aa).

ATP is bound at residue 101–108 (GSVAVGKS).

The protein belongs to the prokaryotic pantothenate kinase family.

Its subcellular location is the cytoplasm. The enzyme catalyses (R)-pantothenate + ATP = (R)-4'-phosphopantothenate + ADP + H(+). It functions in the pathway cofactor biosynthesis; coenzyme A biosynthesis; CoA from (R)-pantothenate: step 1/5. This Xanthobacter autotrophicus (strain ATCC BAA-1158 / Py2) protein is Pantothenate kinase.